We begin with the raw amino-acid sequence, 375 residues long: Deoxyhypusine synthase-like protein (375 aa).

Belongs to the deoxyhypusine synthase family.

The polypeptide is Deoxyhypusine synthase-like protein (Elusimicrobium minutum (strain Pei191)).